The primary structure comprises 353 residues: UDP-N-acetylenolpyruvoylglucosamine reductase (353 aa).

The FAD-binding PCMH-type domain maps to 31–201; it reads LASHAPAFVA…GSVRFALPRP (171 aa). The active site involves arginine 177. Residue serine 250 is the Proton donor of the active site. The active site involves glutamate 346.

Belongs to the MurB family. FAD is required as a cofactor.

Its subcellular location is the cytoplasm. The catalysed reaction is UDP-N-acetyl-alpha-D-muramate + NADP(+) = UDP-N-acetyl-3-O-(1-carboxyvinyl)-alpha-D-glucosamine + NADPH + H(+). Its pathway is cell wall biogenesis; peptidoglycan biosynthesis. Cell wall formation. This is UDP-N-acetylenolpyruvoylglucosamine reductase from Bordetella parapertussis (strain 12822 / ATCC BAA-587 / NCTC 13253).